The primary structure comprises 822 residues: Valine--tRNA ligase (822 aa).

A 'HIGH' region motif is present at residues Pro41–His51. The 'KMSKS' region signature appears at Lys511–Ser515. Lys514 contributes to the ATP binding site. Positions Glu765–Lys822 form a coiled coil.

Belongs to the class-I aminoacyl-tRNA synthetase family. ValS type 1 subfamily. As to quaternary structure, monomer.

It is found in the cytoplasm. The catalysed reaction is tRNA(Val) + L-valine + ATP = L-valyl-tRNA(Val) + AMP + diphosphate. In terms of biological role, catalyzes the attachment of valine to tRNA(Val). As ValRS can inadvertently accommodate and process structurally similar amino acids such as threonine, to avoid such errors, it has a 'posttransfer' editing activity that hydrolyzes mischarged Thr-tRNA(Val) in a tRNA-dependent manner. The sequence is that of Valine--tRNA ligase from Mesomycoplasma hyopneumoniae (strain 7448) (Mycoplasma hyopneumoniae).